The sequence spans 20 residues: Antifungal protein 2 large subunit (20 aa).

Residues 1 to 20 (PEDPQRRYQEXQREXRXQQE) are disordered.

Heterodimer of a large and a small subunit.

In terms of biological role, possesses antifungal activity against P.infestans but not F.graminearum. In Malva parviflora (Little mallow), this protein is Antifungal protein 2 large subunit.